The following is a 492-amino-acid chain: Acetyl-coenzyme A carboxylase carboxyl transferase subunit beta, chloroplastic (492 aa).

The interval 198 to 219 is disordered; it reads STNGSDLTISESSNESESSNES. The CoA carboxyltransferase N-terminal domain occupies 228–492; sequence LWVQCENCYG…FHGRFPLNQN (265 aa). Residues cysteine 232, cysteine 235, cysteine 251, and cysteine 254 each contribute to the Zn(2+) site. The segment at 232 to 254 adopts a C4-type zinc-finger fold; sequence CENCYGLNYKKFLKSKMYLCEQC.

This sequence belongs to the AccD/PCCB family. As to quaternary structure, acetyl-CoA carboxylase is a heterohexamer composed of biotin carboxyl carrier protein, biotin carboxylase and 2 subunits each of ACCase subunit alpha and ACCase plastid-coded subunit beta (accD). The cofactor is Zn(2+).

Its subcellular location is the plastid. It is found in the chloroplast stroma. The catalysed reaction is N(6)-carboxybiotinyl-L-lysyl-[protein] + acetyl-CoA = N(6)-biotinyl-L-lysyl-[protein] + malonyl-CoA. It functions in the pathway lipid metabolism; malonyl-CoA biosynthesis; malonyl-CoA from acetyl-CoA: step 1/1. Functionally, component of the acetyl coenzyme A carboxylase (ACC) complex. Biotin carboxylase (BC) catalyzes the carboxylation of biotin on its carrier protein (BCCP) and then the CO(2) group is transferred by the transcarboxylase to acetyl-CoA to form malonyl-CoA. The chain is Acetyl-coenzyme A carboxylase carboxyl transferase subunit beta, chloroplastic from Citrus sinensis (Sweet orange).